The chain runs to 213 residues: NDR1/HIN1-like protein 26 (213 aa).

Residues 1–27 (MSQISITSPKHCAKKGGININNRHKKL) are Cytoplasmic-facing. Residues 28 to 48 (FFTFSTFFSGLLLIIFLVWLI) traverse the membrane as a helical segment. At 49-213 (LHPERPEFSL…LQGTRCSTTI (165 aa)) the chain is on the lumenal side. N-linked (GlcNAc...) asparagine glycosylation is found at asparagine 67, asparagine 77, and asparagine 195.

Expressed in the vasculature of roots, rosette leaves, stems, cauline leaves and flowers. Specifically expressed in phloem.

It is found in the cell junction. The protein resides in the plasmodesma. It localises to the endoplasmic reticulum membrane. Functionally, involved in the regulation of sugar, amino acid and some primary metabolite export from companion cells (CCs) to sieve elements (SEs) in phloem. Required for apoplastic phloem sugar loading in source leaves in order to transport it to sink tissues. Required for correct sugar partitioning between source leaves and sink organs. The chain is NDR1/HIN1-like protein 26 from Arabidopsis thaliana (Mouse-ear cress).